The primary structure comprises 1453 residues: Collagen alpha-1(I) chain (1453 aa).

Positions M1 to G22 are cleaved as a signal peptide. Positions Q23 to S151 are cleaved as a propeptide — N-terminal propeptide. The 59-residue stretch at V29 to P87 folds into the VWFC domain. Residue N56 is glycosylated (N-linked (GlcNAc...) asparagine). The segment at V97 to R1206 is disordered. Composition is skewed to pro residues over residues P109–P118 and P128–P143. Q152 carries the pyrrolidone carboxylic acid modification. The segment at Q152 to P167 is nonhelical region (N-terminal). K160 is subject to Allysine. S161 is subject to Phosphoserine. Residues G168–P1181 form a triple-helical region region. 4-hydroxyproline occurs at positions 179, 182, 185, 194, 197, 200, 215, 230, 236, 245, and 251. Residues P187–M206 are compositionally biased toward low complexity. Over residues N218 to E232 the composition is skewed to basic and acidic residues. 5-hydroxylysine; alternate is present on K254. O-linked (Gal...) hydroxylysine; alternate glycosylation is present at K254. S260 carries the post-translational modification Phosphoserine. Residues P278, P281, P287, P296, and P302 each carry the 4-hydroxyproline modification. Over residues S307–A320 the composition is skewed to low complexity. Pro residues predominate over residues P322–F334. P323, P332, P335, P362, P365, P377, P383, P392, P398, P401, and P416 each carry 4-hydroxyproline. A compositionally biased stretch (low complexity) spans P335 to E361. The span at A368–P418 shows a compositional bias: low complexity. Residue K419 is modified to 5-hydroxylysine. A 4-hydroxyproline mark is found at P425, P428, P440, P449, P464, P470, P479, and P485. Residues G474–G483 show a composition bias toward gly residues. At K494 the chain carries 5-hydroxylysine. P503, P512, P518, P524, P533, P536, P545, P554, P560, P572, P581, P590, P593, P611, P629, P635, P641, P647, P653, P659, P671, P680, P692, P704, P707, P713, P719, and P728 each carry 4-hydroxyproline. A compositionally biased stretch (low complexity) spans K527–A566. Positions Q623–Q650 are enriched in low complexity. Composition is skewed to low complexity over residues P685 to D695 and A703 to Q716. The Cell attachment site signature appears at R734–D736. K740 bears the 5-hydroxylysine mark. Residues P746, P761, and P767 each carry the 4-hydroxyproline modification. The segment covering T773–A787 has biased composition (low complexity). S776 is modified (phosphoserine). 4-hydroxyproline occurs at positions 788, 794, 797, 806, 812, 830, 839, and 848. A compositionally biased stretch (low complexity) spans A800 to K815. The span at P829–P841 shows a compositional bias: pro residues. The segment covering I842–V872 has biased composition (low complexity). K851 is subject to 5-hydroxylysine. 2 positions are modified to 4-hydroxyproline: P860 and P866. P874 is subject to 3-hydroxyproline. 4-hydroxyproline is present on residues P875, P884, P887, P908, P917, P926, P935, P953, P962, P965, P971, P986, P992, P998, P1007, and P1013. Residues E901–E910 are compositionally biased toward low complexity. The span at A920–P935 shows a compositional bias: low complexity. Positions P985–A995 are enriched in pro residues. The span at P997–S1012 shows a compositional bias: low complexity. 5-hydroxylysine is present on K1022. A compositionally biased stretch (pro residues) spans A1031–V1046. P1034, P1037, and P1040 each carry 4-hydroxyproline. The span at I1067–P1081 shows a compositional bias: low complexity. Positions R1082–D1084 match the Cell attachment site motif. The span at R1082–I1096 shows a compositional bias: basic and acidic residues. K1085 is modified (5-hydroxylysine). Residue K1097 is modified to 5-hydroxylysine; alternate. The O-linked (Gal...) hydroxylysine; alternate glycan is linked to K1097. The span at F1102–P1148 shows a compositional bias: low complexity. 4-hydroxyproline is present on residues P1109, P1112, P1115, P1133, and P1148. Position 1153 is a 3-hydroxyproline (P1153). P1154 is subject to 4-hydroxyproline. Positions A1166–P1181 are enriched in pro residues. A 3-hydroxyproline modification is found at P1168. P1169 is subject to 4-hydroxyproline. P1171 is subject to 3-hydroxyproline. P1172 is subject to 4-hydroxyproline. A 3-hydroxyproline modification is found at P1174. A 4-hydroxyproline mark is found at P1175, P1178, and P1181. The tract at residues G1176–D1186 is major antigenic determinant (of neutral salt-extracted rat skin collagen). Residues S1182–A1207 form a nonhelical region (C-terminal) region. K1197 carries the allysine modification. The segment covering K1197–R1206 has biased composition (basic and acidic residues). Positions D1208–V1453 are cleaved as a propeptide — C-terminal propeptide. In terms of domain architecture, Fibrillar collagen NC1 spans L1218–V1453. Intrachain disulfides connect C1248/C1280, C1288/C1451, and C1359/C1404. Ca(2+) contacts are provided by D1266, N1268, Q1269, C1271, and D1274. N1354 is a glycosylation site (N-linked (GlcNAc...) asparagine).

Belongs to the fibrillar collagen family. In terms of assembly, trimers of one alpha 2(I) and two alpha 1(I) chains. Interacts with MRC2. Interacts with TRAM2. Interacts with MFAP4 in a Ca (2+)-dependent manner. Contains mostly 4-hydroxyproline. Proline residues at the third position of the tripeptide repeating unit (G-X-Y) are hydroxylated in some or all of the chains. In terms of processing, contains 3-hydroxyproline at a few sites. This modification occurs on the first proline residue in the sequence motif Gly-Pro-Hyp, where Hyp is 4-hydroxyproline. Post-translationally, lysine residues at the third position of the tripeptide repeating unit (G-X-Y) are 5-hydroxylated in some or all of the chains. O-glycosylated on hydroxylated lysine residues. The O-linked glycan consists of a Glc-Gal disaccharide. As to expression, forms the fibrils of tendon, ligaments and bones. In bones the fibrils are mineralized with calcium hydroxyapatite.

It is found in the secreted. Its subcellular location is the extracellular space. The protein localises to the extracellular matrix. Its function is as follows. Type I collagen is a member of group I collagen (fibrillar forming collagen). The chain is Collagen alpha-1(I) chain (Col1a1) from Rattus norvegicus (Rat).